A 239-amino-acid chain; its full sequence is Skn-1 dependent zygotic transcript 1 protein (239 aa).

In terms of tissue distribution, expressed in mesendodermal precursor cells of embryos.

Its function is as follows. May have a role in mesendoderm development during embryogenesis. The polypeptide is Skn-1 dependent zygotic transcript 1 protein (sdz-1) (Caenorhabditis elegans).